The following is a 359-amino-acid chain: 3-dehydroquinate synthase (359 aa).

Residues 71-76, 105-109, 129-130, lysine 142, and lysine 151 each bind NAD(+); these read DGEAYK, GVVGD, and TT. Residues glutamate 184, histidine 247, and histidine 264 each coordinate Zn(2+).

The protein belongs to the sugar phosphate cyclases superfamily. Dehydroquinate synthase family. Co(2+) is required as a cofactor. The cofactor is Zn(2+). NAD(+) serves as cofactor.

It localises to the cytoplasm. It carries out the reaction 7-phospho-2-dehydro-3-deoxy-D-arabino-heptonate = 3-dehydroquinate + phosphate. The protein operates within metabolic intermediate biosynthesis; chorismate biosynthesis; chorismate from D-erythrose 4-phosphate and phosphoenolpyruvate: step 2/7. Its function is as follows. Catalyzes the conversion of 3-deoxy-D-arabino-heptulosonate 7-phosphate (DAHP) to dehydroquinate (DHQ). The polypeptide is 3-dehydroquinate synthase (Burkholderia orbicola (strain MC0-3)).